The chain runs to 498 residues: Glycerol kinase (498 aa).

ADP is bound at residue threonine 12. The ATP site is built by threonine 12, threonine 13, and serine 14. Threonine 12 contacts sn-glycerol 3-phosphate. Position 16 (arginine 16) interacts with ADP. Sn-glycerol 3-phosphate contacts are provided by arginine 82, tyrosine 134, and aspartate 243. Positions 82, 134, 243, and 244 each coordinate glycerol. ADP-binding residues include threonine 265 and glycine 308. Residues threonine 265, glycine 308, glutamine 312, and glycine 411 each coordinate ATP. Glycine 411 serves as a coordination point for ADP.

This sequence belongs to the FGGY kinase family.

The catalysed reaction is glycerol + ATP = sn-glycerol 3-phosphate + ADP + H(+). It functions in the pathway polyol metabolism; glycerol degradation via glycerol kinase pathway; sn-glycerol 3-phosphate from glycerol: step 1/1. Its activity is regulated as follows. Inhibited by fructose 1,6-bisphosphate (FBP). Key enzyme in the regulation of glycerol uptake and metabolism. Catalyzes the phosphorylation of glycerol to yield sn-glycerol 3-phosphate. The polypeptide is Glycerol kinase (Brucella suis (strain ATCC 23445 / NCTC 10510)).